We begin with the raw amino-acid sequence, 229 residues long: Orotidine 5'-phosphate decarboxylase (229 aa).

Residues Asp11, Lys33, 60-69, Thr119, Arg180, Gln189, Gly209, and Arg210 contribute to the substrate site; that span reads DLKFHDIPNT. Lys62 (proton donor) is an active-site residue.

This sequence belongs to the OMP decarboxylase family. Type 1 subfamily. As to quaternary structure, homodimer.

The enzyme catalyses orotidine 5'-phosphate + H(+) = UMP + CO2. It functions in the pathway pyrimidine metabolism; UMP biosynthesis via de novo pathway; UMP from orotate: step 2/2. Catalyzes the decarboxylation of orotidine 5'-monophosphate (OMP) to uridine 5'-monophosphate (UMP). The sequence is that of Orotidine 5'-phosphate decarboxylase from Dichelobacter nodosus (strain VCS1703A).